The primary structure comprises 114 residues: Large ribosomal subunit protein bL19 (114 aa).

The protein belongs to the bacterial ribosomal protein bL19 family.

Functionally, this protein is located at the 30S-50S ribosomal subunit interface and may play a role in the structure and function of the aminoacyl-tRNA binding site. This chain is Large ribosomal subunit protein bL19 (rplS), found in Listeria monocytogenes serovar 1/2a (strain ATCC BAA-679 / EGD-e).